The primary structure comprises 116 residues: Nitrogenase-stabilizing/protective protein NifW (116 aa).

Belongs to the NifW family. In terms of assembly, homotrimer; associates with NifD.

Functionally, may protect the nitrogenase Fe-Mo protein from oxidative damage. The polypeptide is Nitrogenase-stabilizing/protective protein NifW (Rhodopseudomonas palustris (strain TIE-1)).